Consider the following 202-residue polypeptide: Alpha-1-acid glycoprotein (202 aa).

An N-terminal signal peptide occupies residues 1-18 (MALLWALAVLSHLPLLDA). Asn-34, Asn-57, Asn-94, Asn-104, and Asn-136 each carry an N-linked (GlcNAc...) asparagine glycan. A disulfide bridge connects residues Cys-91 and Cys-184.

It belongs to the calycin superfamily. Lipocalin family.

The protein resides in the secreted. In terms of biological role, functions as a transport protein in the blood stream. Binds various ligands in the interior of its beta-barrel domain. Appears to function in modulating the activity of the immune system during the acute-phase reaction. This is Alpha-1-acid glycoprotein (ORM1) from Bos taurus (Bovine).